A 176-amino-acid chain; its full sequence is ATP synthase subunit b, chloroplastic (176 aa).

The chain crosses the membrane as a helical span at residues 19 to 39 (LDLLETNIINIFILIIILIYL).

It belongs to the ATPase B chain family. F-type ATPases have 2 components, F(1) - the catalytic core - and F(0) - the membrane proton channel. F(1) has five subunits: alpha(3), beta(3), gamma(1), delta(1), epsilon(1). F(0) has four main subunits: a(1), b(1), b'(1) and c(10-14). The alpha and beta chains form an alternating ring which encloses part of the gamma chain. F(1) is attached to F(0) by a central stalk formed by the gamma and epsilon chains, while a peripheral stalk is formed by the delta, b and b' chains.

Its subcellular location is the plastid. It localises to the chloroplast thylakoid membrane. In terms of biological role, f(1)F(0) ATP synthase produces ATP from ADP in the presence of a proton or sodium gradient. F-type ATPases consist of two structural domains, F(1) containing the extramembraneous catalytic core and F(0) containing the membrane proton channel, linked together by a central stalk and a peripheral stalk. During catalysis, ATP synthesis in the catalytic domain of F(1) is coupled via a rotary mechanism of the central stalk subunits to proton translocation. Component of the F(0) channel, it forms part of the peripheral stalk, linking F(1) to F(0). The chain is ATP synthase subunit b, chloroplastic from Galdieria sulphuraria (Red alga).